Reading from the N-terminus, the 165-residue chain is Cyanate hydratase (165 aa).

Residues 1-20 (MAQNKANTVSQLQSLKNKSG) are disordered. Catalysis depends on residues Arg90, Glu93, and Ser116.

Belongs to the cyanase family.

The enzyme catalyses cyanate + hydrogencarbonate + 3 H(+) = NH4(+) + 2 CO2. Functionally, catalyzes the reaction of cyanate with bicarbonate to produce ammonia and carbon dioxide. The protein is Cyanate hydratase of Medicago truncatula (Barrel medic).